The chain runs to 310 residues: Methionyl-tRNA formyltransferase (310 aa).

Residue 110-113 (SLLP) participates in (6S)-5,6,7,8-tetrahydrofolate binding.

It belongs to the Fmt family.

It catalyses the reaction L-methionyl-tRNA(fMet) + (6R)-10-formyltetrahydrofolate = N-formyl-L-methionyl-tRNA(fMet) + (6S)-5,6,7,8-tetrahydrofolate + H(+). In terms of biological role, attaches a formyl group to the free amino group of methionyl-tRNA(fMet). The formyl group appears to play a dual role in the initiator identity of N-formylmethionyl-tRNA by promoting its recognition by IF2 and preventing the misappropriation of this tRNA by the elongation apparatus. In Streptomyces avermitilis (strain ATCC 31267 / DSM 46492 / JCM 5070 / NBRC 14893 / NCIMB 12804 / NRRL 8165 / MA-4680), this protein is Methionyl-tRNA formyltransferase.